The chain runs to 499 residues: Eukaryotic peptide chain release factor GTP-binding subunit ERF3A (499 aa).

The segment at 1–69 (MELSEPIVEN…PKSVVAPPGA (69 aa)) is disordered. Residues 41-50 (RPPEESAHEM) show a composition bias toward basic and acidic residues. The 227-residue stretch at 72-298 (KEHVNVVFIG…DNLPNFNRSV (227 aa)) folds into the tr-type G domain. Residues 81-88 (GHVDAGKS) form a G1 region. GTP is bound at residue 84-89 (DAGKST). The G2 stretch occupies residues 137–141 (GKTVE). Positions 158–161 (DAPG) are G3. Residues 220-223 (NKMD) and 262-264 (SGL) each bind GTP. The tract at residues 220 to 223 (NKMD) is G4. Residues 262 to 264 (SGL) form a G5 region.

Belongs to the TRAFAC class translation factor GTPase superfamily. Classic translation factor GTPase family. ERF3 subfamily. As to quaternary structure, component of the eRF1-eRF3-GTP ternary complex, composed of ETF1/ERF1 and ERF3 (GSPT1/ERF3A or GSPT2/ERF3B) and GTP. Component of the transient SURF (SMG1-UPF1-eRF1-eRF3) complex. The ETF1-GSPT1 complex interacts with JMJD4. Interacts with PABPC1. Interacts with SHFL.

It catalyses the reaction GTP + H2O = GDP + phosphate + H(+). Its function is as follows. GTPase component of the eRF1-eRF3-GTP ternary complex, a ternary complex that mediates translation termination in response to the termination codons UAA, UAG and UGA. GSPT1/ERF3A mediates ETF1/ERF1 delivery to stop codons: The eRF1-eRF3-GTP complex binds to a stop codon in the ribosomal A-site. GTP hydrolysis by GSPT1/ERF3A induces a conformational change that leads to its dissociation, permitting ETF1/ERF1 to accommodate fully in the A-site. Component of the transient SURF complex which recruits UPF1 to stalled ribosomes in the context of nonsense-mediated decay (NMD) of mRNAs containing premature stop codons. Required for SHFL-mediated translation termination which inhibits programmed ribosomal frameshifting (-1PRF) of mRNA from viruses and cellular genes. The protein is Eukaryotic peptide chain release factor GTP-binding subunit ERF3A (GSPT1) of Homo sapiens (Human).